A 563-amino-acid chain; its full sequence is BOS complex subunit NCLN (563 aa).

An N-terminal signal peptide occupies residues 1–42 (MLEEAGEVLENVLKASCLPLGFIVFLPAVLLLVAPPLPAADA). At 43-522 (AHEFTVYRMQ…VMNAYRVKPA (480 aa)) the chain is on the lumenal side. Residues Asn-241 and Asn-428 are each glycosylated (N-linked (GlcNAc...) asparagine). A helical membrane pass occupies residues 523–543 (IFDLLLALCIGAYLGMAYTAV). At 544 to 563 (QHFHVLYKTVQRLLLKAKAQ) the chain is on the cytoplasmic side.

Belongs to the nicastrin family. Component of the back of Sec61 (BOS) complex, composed of NCLN/Nicalin, NOMO1 and TMEM147. The BOS complex is part of the multi-pass translocon (MPT) complex, composed of three subcomplexes, the GEL complex (composed of RAB5IF/OPTI and TMCO1), the BOS complex (composed of NCLN/Nicalin, NOMO1 and TMEM147) and the PAT complex (composed of WDR83OS/Asterix and CCDC47). The MPT complex associates with the SEC61 complex.

It is found in the endoplasmic reticulum membrane. Component of the multi-pass translocon (MPT) complex that mediates insertion of multi-pass membrane proteins into the lipid bilayer of membranes. The MPT complex takes over after the SEC61 complex: following membrane insertion of the first few transmembrane segments of proteins by the SEC61 complex, the MPT complex occludes the lateral gate of the SEC61 complex to promote insertion of subsequent transmembrane regions. May antagonize Nodal signaling and subsequent organization of axial structures during mesodermal patterning, via its interaction with NOMO. This Rattus norvegicus (Rat) protein is BOS complex subunit NCLN (Ncln).